A 630-amino-acid polypeptide reads, in one-letter code: Protein mono-ADP-ribosyltransferase PARP6 (630 aa).

At Cys237 the chain carries ADP-ribosylcysteine. In terms of domain architecture, PARP catalytic spans 394-620; it reads EMTQGSYLEI…QDPKIQKEIM (227 aa). At Asp600 the chain carries ADP-ribosyl aspartic acid.

This sequence belongs to the ARTD/PARP family. Auto-mono-ADP-ribosylated.

The catalysed reaction is L-aspartyl-[protein] + NAD(+) = 4-O-(ADP-D-ribosyl)-L-aspartyl-[protein] + nicotinamide. It carries out the reaction L-cysteinyl-[protein] + NAD(+) = S-(ADP-D-ribosyl)-L-cysteinyl-[protein] + nicotinamide + H(+). Functionally, mono-ADP-ribosyltransferase that mediates mono-ADP-ribosylation of target proteins. The chain is Protein mono-ADP-ribosyltransferase PARP6 from Homo sapiens (Human).